A 272-amino-acid polypeptide reads, in one-letter code: Dermonecrotic toxin LvSicTox-alphaIC1bii (272 aa).

His5 is an active-site residue. Residues Glu25 and Asp27 each contribute to the Mg(2+) site. Residue His41 is the Nucleophile of the active site. Disulfide bonds link Cys45/Cys51 and Cys47/Cys189. Asp84 is a Mg(2+) binding site.

It belongs to the arthropod phospholipase D family. Class II subfamily. Mg(2+) is required as a cofactor. Expressed by the venom gland.

The protein localises to the secreted. It carries out the reaction an N-(acyl)-sphingosylphosphocholine = an N-(acyl)-sphingosyl-1,3-cyclic phosphate + choline. The catalysed reaction is an N-(acyl)-sphingosylphosphoethanolamine = an N-(acyl)-sphingosyl-1,3-cyclic phosphate + ethanolamine. The enzyme catalyses a 1-acyl-sn-glycero-3-phosphocholine = a 1-acyl-sn-glycero-2,3-cyclic phosphate + choline. It catalyses the reaction a 1-acyl-sn-glycero-3-phosphoethanolamine = a 1-acyl-sn-glycero-2,3-cyclic phosphate + ethanolamine. Dermonecrotic toxins cleave the phosphodiester linkage between the phosphate and headgroup of certain phospholipids (sphingolipid and lysolipid substrates), forming an alcohol (often choline) and a cyclic phosphate. This toxin acts on sphingomyelin (SM). It may also act on ceramide phosphoethanolamine (CPE), lysophosphatidylcholine (LPC) and lysophosphatidylethanolamine (LPE), but not on lysophosphatidylserine (LPS), and lysophosphatidylglycerol (LPG). It acts by transphosphatidylation, releasing exclusively cyclic phosphate products as second products. Induces dermonecrosis, hemolysis, increased vascular permeability, edema, inflammatory response, and platelet aggregation. The polypeptide is Dermonecrotic toxin LvSicTox-alphaIC1bii (Loxosceles variegata (Recluse spider)).